Here is a 185-residue protein sequence, read N- to C-terminus: Ribosome-recycling factor (185 aa).

It belongs to the RRF family.

It is found in the cytoplasm. Responsible for the release of ribosomes from messenger RNA at the termination of protein biosynthesis. May increase the efficiency of translation by recycling ribosomes from one round of translation to another. The protein is Ribosome-recycling factor of Buchnera aphidicola subsp. Acyrthosiphon pisum (strain 5A).